Reading from the N-terminus, the 344-residue chain is MALDVKSRAKLYEKLDFLGEGQFATVYKARDKTTNTIVAIKKIKVGHRTEAKDGINRTALREIKLLQELSHPNIIGLLDAFGHKSNISLLCFMETDLEVIIKDTSLVLTPANIKAYILMSLQGLEYMHNHWILHRDLKPNNLLLDENGVLKLADFGLAKAFGSPNRVYTHQVVTRWYRAPELLFGARMYGVGVDMWAVGSILAELLLRVPFLAGDSDLDQLTGIFEALGTPTEETWPGMSNLPDYVSFKLFPGTPLEHIFSAAGDDLLELLKGLFTFNPCTRTTASQALKMRYFSIRPGPTPGPQLPRPNSSTEALKEKENLLIGIKRKRDSIEQGTLKKKLVF.

The Protein kinase domain occupies 12 to 294; sequence YEKLDFLGEG…ASQALKMRYF (283 aa). ATP contacts are provided by residues 18–26 and K41; that span reads LGEGQFATV. D136 (proton acceptor) is an active-site residue. S163 is modified (phosphoserine; by CDK1 and CDK2). T169 carries the post-translational modification Phosphothreonine; by CDK2.

It belongs to the protein kinase superfamily. CMGC Ser/Thr protein kinase family. CDC2/CDKX subfamily. In terms of assembly, probably associates with cyclin-H (ccnh) and mat1 to form a multimeric active enzyme. Phosphorylation of Ser-163 during mitosis inactivates the enzyme. Phosphorylation of Thr-169 is required for activity. Phosphorylated at Ser-163 and Thr-169 by CDK2.

Its subcellular location is the nucleus. It carries out the reaction L-seryl-[protein] + ATP = O-phospho-L-seryl-[protein] + ADP + H(+). The enzyme catalyses L-threonyl-[protein] + ATP = O-phospho-L-threonyl-[protein] + ADP + H(+). It catalyses the reaction [DNA-directed RNA polymerase] + ATP = phospho-[DNA-directed RNA polymerase] + ADP + H(+). Phosphorylation at Thr-169 is required for enzymatic activity. Serine/threonine kinase involved in cell cycle control and in RNA polymerase II-mediated RNA transcription. Cyclin-dependent kinases (CDKs) are activated by the binding to a cyclin and mediate the progression through the cell cycle. Each different complex controls a specific transition between 2 subsequent phases in the cell cycle. Required for both activation and complex formation of cdk1/cyclin-B during G2-M transition, and for activation of cdk2/cyclins during G1-S transition (but not complex formation). cdk7 is the catalytic subunit of the CDK-activating kinase (CAK) complex. CAK activates the cyclin-associated kinases cdk1, cdk2, cdk4 and cdk6 by threonine phosphorylation, thus regulating cell cycle progression. Initiates transcription by RNA polymerase II by mediating phosphorylation of polr2a at 'Ser-5' of the repetitive C-terminal domain (CTD) when polr2a is in complex with DNA, promoting dissociation from DNA and initiation. CAK complexed to the core-TFIIH basal transcription factor activates RNA polymerase II by serine phosphorylation of the CTD of polr2a, allowing its escape from the promoter and elongation of the transcripts. The sequence is that of Cyclin-dependent kinase 7 (cdk7) from Carassius auratus (Goldfish).